We begin with the raw amino-acid sequence, 275 residues long: Elongation factor Ts (275 aa).

The tract at residues 76–79 is involved in Mg(2+) ion dislocation from EF-Tu; sequence TDFV.

The protein belongs to the EF-Ts family.

The protein resides in the cytoplasm. Functionally, associates with the EF-Tu.GDP complex and induces the exchange of GDP to GTP. It remains bound to the aminoacyl-tRNA.EF-Tu.GTP complex up to the GTP hydrolysis stage on the ribosome. In Rhodococcus opacus (strain B4), this protein is Elongation factor Ts.